We begin with the raw amino-acid sequence, 304 residues long: UDP-3-O-acyl-N-acetylglucosamine deacetylase (304 aa).

Zn(2+)-binding residues include histidine 78, histidine 237, and aspartate 241. Histidine 264 serves as the catalytic Proton donor.

This sequence belongs to the LpxC family. It depends on Zn(2+) as a cofactor.

The enzyme catalyses a UDP-3-O-[(3R)-3-hydroxyacyl]-N-acetyl-alpha-D-glucosamine + H2O = a UDP-3-O-[(3R)-3-hydroxyacyl]-alpha-D-glucosamine + acetate. Its pathway is glycolipid biosynthesis; lipid IV(A) biosynthesis; lipid IV(A) from (3R)-3-hydroxytetradecanoyl-[acyl-carrier-protein] and UDP-N-acetyl-alpha-D-glucosamine: step 2/6. Functionally, catalyzes the hydrolysis of UDP-3-O-myristoyl-N-acetylglucosamine to form UDP-3-O-myristoylglucosamine and acetate, the committed step in lipid A biosynthesis. The polypeptide is UDP-3-O-acyl-N-acetylglucosamine deacetylase (Legionella pneumophila (strain Paris)).